We begin with the raw amino-acid sequence, 216 residues long: Probable Golgi SNAP receptor complex member 2 (216 aa).

Over 1–194 the chain is Cytoplasmic; that stretch reads MESLYHQTNN…IERRLVEDRR (194 aa). A coiled-coil region spans residues 62 to 103; it reads QRQSSKLRVDQLKYDLRHLQTSLQTARERRQRRMQEISEREQ. A helical; Anchor for type IV membrane protein membrane pass occupies residues 195 to 215; the sequence is IFIGGVVVTLLIIALIIYFLV. Residue Leu-216 is a topological domain, vesicular.

It belongs to the GOSR2 family. In terms of assembly, part of a unique SNARE complex.

Its subcellular location is the golgi apparatus. It is found in the cis-Golgi network membrane. It localises to the golgi apparatus membrane. The protein localises to the endoplasmic reticulum membrane. In terms of biological role, involved in transport of proteins from the cis/medial-Golgi to the trans-Golgi network. The sequence is that of Probable Golgi SNAP receptor complex member 2 from Drosophila melanogaster (Fruit fly).